Consider the following 110-residue polypeptide: Large ribosomal subunit protein mL60 (110 aa).

The protein belongs to the mitochondrion-specific ribosomal protein mL60 family. As to quaternary structure, component of the mitochondrial large ribosomal subunit (mt-LSU). Mature N.crassa 74S mitochondrial ribosomes consist of a small (37S) and a large (54S) subunit. The 37S small subunit contains a 16S ribosomal RNA (16S mt-rRNA) and 32 different proteins. The 54S large subunit contains a 23S rRNA (23S mt-rRNA) and 42 different proteins.

The protein localises to the mitochondrion. Its function is as follows. Component of the mitochondrial ribosome (mitoribosome), a dedicated translation machinery responsible for the synthesis of mitochondrial genome-encoded proteins, including at least some of the essential transmembrane subunits of the mitochondrial respiratory chain. The mitoribosomes are attached to the mitochondrial inner membrane and translation products are cotranslationally integrated into the membrane. This Neurospora crassa (strain ATCC 24698 / 74-OR23-1A / CBS 708.71 / DSM 1257 / FGSC 987) protein is Large ribosomal subunit protein mL60 (mrpl31).